The sequence spans 64 residues: uncharacterized protein (64 aa).

This is an uncharacterized protein from Dictyostelium discoideum (Social amoeba).